Reading from the N-terminus, the 269-residue chain is MSRKPSPTRRTRIHRFHKGSCGRKLVGLTCYDFSTARVLSDCELDFLLVGDSASGVIYGYENTGSVCLDEIIYLAAGVVRGAPNSFIIVDLPFGTYEKSDELAVETAIEVIKRTGASAVKLEGGARMACRISAIVRAGVPVMGHIGFTPQTINALGGYKIQGRDNADLIYLDAQAVEQAGAFAVVMEMVTEDLAKTITSEIKIATIGVGAGRYTDGQLLVINDLIGLSEKKITFAPRYASIDNTVASCVKLWRKDVLEGNFPQKDHIPA.

Positions 51 and 90 each coordinate Mg(2+). 3-methyl-2-oxobutanoate-binding positions include 51–52 (DS), Asp-90, and Lys-120. Position 122 (Glu-122) interacts with Mg(2+). Glu-187 serves as the catalytic Proton acceptor.

Belongs to the PanB family. In terms of assembly, homodecamer; pentamer of dimers. Mg(2+) is required as a cofactor.

It localises to the cytoplasm. The enzyme catalyses 3-methyl-2-oxobutanoate + (6R)-5,10-methylene-5,6,7,8-tetrahydrofolate + H2O = 2-dehydropantoate + (6S)-5,6,7,8-tetrahydrofolate. The protein operates within cofactor biosynthesis; (R)-pantothenate biosynthesis; (R)-pantoate from 3-methyl-2-oxobutanoate: step 1/2. Its function is as follows. Catalyzes the reversible reaction in which hydroxymethyl group from 5,10-methylenetetrahydrofolate is transferred onto alpha-ketoisovalerate to form ketopantoate. This chain is 3-methyl-2-oxobutanoate hydroxymethyltransferase, found in Tropheryma whipplei (strain TW08/27) (Whipple's bacillus).